Consider the following 976-residue polypeptide: Chloride channel protein 1 (976 aa).

The Cytoplasmic portion of the chain corresponds to Met1–Trp118. The tract at residues Asp71–Asp92 is disordered. Over residues Gly77–Ser87 the composition is skewed to low complexity. Residues Ile119–Tyr150 form a helical membrane-spanning segment. The Extracellular segment spans residues Tyr151 to Pro158. A helical membrane pass occupies residues Leu159–Cys179. Over His180 to Ser183 the chain is Cytoplasmic. An intramembrane region (note=Loop between two helices) is located at residues Pro184–Ser189. A Selectivity filter part_1 motif is present at residues Gly188–Pro192. Ser189 is a chloride binding site. The helical intramembrane region spans Gly190 to Lys195. Residues Thr196–Thr208 lie on the Cytoplasmic side of the membrane. The segment at residues Leu209–Gly224 is an intramembrane region (helical). The note=Loop between two helices intramembrane region spans Ser225–Gly230. Residues Gly230–Pro234 carry the Selectivity filter part_2 motif. Positions Lys231–Leu246 form an intramembrane region, helical. Residues Ser247 to Thr268 lie on the Cytoplasmic side of the membrane. 2 consecutive intramembrane regions (helical) follow at residues Val269–Gly280 and Thr281–Ile290. The Cytoplasmic portion of the chain corresponds to Glu291 to Asn301. The helical transmembrane segment at Tyr302 to Val321 threads the bilayer. Residues Trp322–Glu347 lie on the Extracellular side of the membrane. A helical membrane pass occupies residues Leu348–Val376. Topologically, residues Arg377 to Arg390 are cytoplasmic. The helical transmembrane segment at Leu391–Pro408 threads the bilayer. Topologically, residues Gly409–Met414 are extracellular. The note=Loop between two helices intramembrane region spans Ala415 to Leu418. The segment at residues Met419–Thr426 is an intramembrane region (helical). The Extracellular portion of the chain corresponds to Leu427–Ile457. Residues Ile458 to Thr475 constitute an intramembrane region (helical). The segment at residues Thr476–Gly482 is an intramembrane region (note=Loop between two helices). A Selectivity filter part_3 motif is present at residues Gly482–Pro486. The segment at residues Gly483–Val498 is an intramembrane region (helical). A chloride-binding site is contributed by Phe484. At Gly499–Pro521 the chain is on the extracellular side. Positions Gly522 to His538 form an intramembrane region, helical. An intramembrane region (note=Loop between two helices) is located at residues Thr539–Val540. The segment at residues Ser541 to Ala554 is an intramembrane region (helical). Over His555–Leu557 the chain is Extracellular. The segment at residues Pro558 to Gln571 is an intramembrane region (helical). The segment at residues Ser572–Pro575 is an intramembrane region (note=Loop between two helices). The segment at residues Ser576 to Tyr578 is an intramembrane region (helical). Tyr578 contributes to the chloride binding site. The Cytoplasmic segment spans residues Asp579–Leu976. One can recognise a CBS 1 domain in the interval Met609 to Glu668. The segment at Asp707–Arg759 is disordered. Residues Glu719–Ser731 show a composition bias toward pro residues. The 56-residue stretch at Ile816–Ser871 folds into the CBS 2 domain. A disordered region spans residues Gly872–Leu976. Ser881 carries the post-translational modification Phosphoserine. Positions Ser914–Ala925 are enriched in pro residues. Composition is skewed to acidic residues over residues Glu938 to Ala955 and Asp967 to Leu976.

This sequence belongs to the chloride channel (TC 2.A.49) family. ClC-1/CLCN1 subfamily. In terms of assembly, homodimer.

The protein resides in the cell membrane. Its subcellular location is the sarcolemma. The protein localises to the T-tubule. It catalyses the reaction chloride(in) = chloride(out). The enzyme catalyses thiocyanate(in) = thiocyanate(out). The catalysed reaction is bromide(in) = bromide(out). It carries out the reaction nitrate(in) = nitrate(out). It catalyses the reaction iodide(out) = iodide(in). Modulated by membrane voltage with depolarization favouring channel opening and hyperpolarization favouring channel closure. Inhibited by acidic pH and ATP binding due to a shift of voltage dependence of common gating to more positive voltages. Inhibited by 9-anthracene-carboxylic. Functionally, voltage-gated chloride channel involved in skeletal muscle excitability. Generates most of the plasma membrane chloride conductance in skeletal muscle fibers, stabilizes the resting membrane potential and contributes to the repolarization phase during action potential firing. Forms a homodimeric channel where each subunit has its own ion conduction pathway. Conducts double-barreled currents controlled by two types of gates, two fast glutamate gates that control each subunit independently and a slow common gate that opens and shuts off both subunits simultaneously. Has a significant open probability at muscle resting potential and is further activated upon membrane depolarization. Permeable to small monovalent anions with ion selectivity for chloride &gt; thiocyanate &gt; bromide &gt; nitrate &gt; iodide. This chain is Chloride channel protein 1 (CLCN1), found in Canis lupus familiaris (Dog).